The chain runs to 171 residues: NADH-quinone oxidoreductase subunit B 2 (171 aa).

4 residues coordinate [4Fe-4S] cluster: Cys-37, Cys-38, Cys-102, and Cys-132.

This sequence belongs to the complex I 20 kDa subunit family. In terms of assembly, NDH-1 is composed of 14 different subunits. Subunits NuoB, C, D, E, F, and G constitute the peripheral sector of the complex. The cofactor is [4Fe-4S] cluster.

It localises to the cell inner membrane. The enzyme catalyses a quinone + NADH + 5 H(+)(in) = a quinol + NAD(+) + 4 H(+)(out). Its function is as follows. NDH-1 shuttles electrons from NADH, via FMN and iron-sulfur (Fe-S) centers, to quinones in the respiratory chain. Couples the redox reaction to proton translocation (for every two electrons transferred, four hydrogen ions are translocated across the cytoplasmic membrane), and thus conserves the redox energy in a proton gradient. The chain is NADH-quinone oxidoreductase subunit B 2 from Chromobacterium violaceum (strain ATCC 12472 / DSM 30191 / JCM 1249 / CCUG 213 / NBRC 12614 / NCIMB 9131 / NCTC 9757 / MK).